The following is a 199-amino-acid chain: Ras-related protein Rab-7b (199 aa).

GTP-binding positions include 15 to 22 (GAIGVGKT), 34 to 40 (YEEYQTT), 63 to 67 (DTGGQ), 124 to 127 (NKID), and 154 to 155 (AK). 2 short sequence motifs (switch) span residues 28 to 41 (YVHKTFYEEYQTTL) and 67 to 82 (QERFRSMVSTFYKGSD). Ser-186 is modified (phosphoserine). Residues Cys-198 and Cys-199 are each lipidated (S-geranylgeranyl cysteine).

This sequence belongs to the small GTPase superfamily. Rab family. As to expression, expressed in heart, placenta, lung, skeletal muscle and peripheral blood leukocyte.

The protein localises to the late endosome. Its subcellular location is the lysosome. It localises to the golgi apparatus. It is found in the trans-Golgi network. The protein resides in the cytoplasmic vesicle. The protein localises to the phagosome. Its subcellular location is the phagosome membrane. Controls vesicular trafficking from endosomes to the trans-Golgi network (TGN). Acts as a negative regulator of TLR9 signaling and can suppress TLR9-triggered TNFA, IL6, and IFNB production in macrophages by promoting TLR9 lysosomal degradation. Also negatively regulates TLR4 signaling in macrophages by promoting lysosomal degradation of TLR4. Promotes megakaryocytic differentiation by increasing NF-kappa-B-dependent IL6 production and subsequently enhancing the association of STAT3 with GATA1. Not involved in the regulation of the EGF- and EGFR degradation pathway. This is Ras-related protein Rab-7b (RAB7B) from Homo sapiens (Human).